The primary structure comprises 492 residues: Phosphoenolpyruvate carboxylase (492 aa).

This sequence belongs to the PEPCase type 2 family. As to quaternary structure, homotetramer. Mg(2+) serves as cofactor.

The enzyme catalyses oxaloacetate + phosphate = phosphoenolpyruvate + hydrogencarbonate. Its function is as follows. Catalyzes the irreversible beta-carboxylation of phosphoenolpyruvate (PEP) to form oxaloacetate (OAA), a four-carbon dicarboxylic acid source for the tricarboxylic acid cycle. In Halobacterium salinarum (strain ATCC 29341 / DSM 671 / R1), this protein is Phosphoenolpyruvate carboxylase.